The following is a 201-amino-acid chain: FMN-dependent NADH:quinone oxidoreductase (201 aa).

FMN is bound by residues serine 10, 16-18 (SQS), 96-99 (MYNF), and 140-143 (SRGG).

It belongs to the azoreductase type 1 family. In terms of assembly, homodimer. Requires FMN as cofactor.

It carries out the reaction 2 a quinone + NADH + H(+) = 2 a 1,4-benzosemiquinone + NAD(+). The enzyme catalyses N,N-dimethyl-1,4-phenylenediamine + anthranilate + 2 NAD(+) = 2-(4-dimethylaminophenyl)diazenylbenzoate + 2 NADH + 2 H(+). Its function is as follows. Quinone reductase that provides resistance to thiol-specific stress caused by electrophilic quinones. Also exhibits azoreductase activity. Catalyzes the reductive cleavage of the azo bond in aromatic azo compounds to the corresponding amines. This Shigella flexneri serotype 5b (strain 8401) protein is FMN-dependent NADH:quinone oxidoreductase.